A 99-amino-acid polypeptide reads, in one-letter code: Ubiquitin-related modifier 1 homolog (99 aa).

The residue at position 99 (Gly99) is a 1-thioglycine. Gly99 is covalently cross-linked (Glycyl lysine isopeptide (Gly-Lys) (interchain with K-? in acceptor proteins)).

Belongs to the URM1 family. In terms of assembly, interacts with cer. C-terminal thiocarboxylation occurs in 2 steps, it is first acyl-adenylated (-COAMP) via the hesA/moeB/thiF part of the MOCS3 homolog, then thiocarboxylated (-COSH) via the rhodanese domain of the MOCS3 homolog.

The protein resides in the cytoplasm. It functions in the pathway tRNA modification; 5-methoxycarbonylmethyl-2-thiouridine-tRNA biosynthesis. Its function is as follows. Acts as a sulfur carrier required for 2-thiolation of mcm(5)S(2)U at tRNA wobble positions of cytosolic tRNA(Lys), tRNA(Glu) and tRNA(Gln). Serves as sulfur donor in tRNA 2-thiolation reaction by being thiocarboxylated (-COSH) at its C-terminus by MOCS3. The sulfur is then transferred to tRNA to form 2-thiolation of mcm(5)S(2)U. Also acts as a ubiquitin-like protein (UBL) that is covalently conjugated via an isopeptide bond to lysine residues of target proteins such as Prx2/Jafrac1, Ciao1, Eip71CD and GILT1. The thiocarboxylated form serves as substrate for conjugation and oxidative stress specifically induces the formation of UBL-protein conjugates. In Drosophila persimilis (Fruit fly), this protein is Ubiquitin-related modifier 1 homolog.